The sequence spans 286 residues: NAD kinase (286 aa).

Asp-74 (proton acceptor) is an active-site residue. Residues 74 to 75, 148 to 149, Asp-178, Ala-186, 189 to 194, and Gln-244 contribute to the NAD(+) site; these read DG, ND, and TAYNLS.

This sequence belongs to the NAD kinase family. It depends on a divalent metal cation as a cofactor.

Its subcellular location is the cytoplasm. It carries out the reaction NAD(+) + ATP = ADP + NADP(+) + H(+). In terms of biological role, involved in the regulation of the intracellular balance of NAD and NADP, and is a key enzyme in the biosynthesis of NADP. Catalyzes specifically the phosphorylation on 2'-hydroxyl of the adenosine moiety of NAD to yield NADP. The sequence is that of NAD kinase from Campylobacter jejuni subsp. jejuni serotype O:6 (strain 81116 / NCTC 11828).